We begin with the raw amino-acid sequence, 344 residues long: tRNA N6-adenosine threonylcarbamoyltransferase (344 aa).

Residues H111 and H115 each coordinate Fe cation. Residues 133–137, D166, G179, and N283 each bind substrate; that span reads LVSGG. Residue D311 participates in Fe cation binding.

It belongs to the KAE1 / TsaD family. Fe(2+) serves as cofactor.

The protein resides in the cytoplasm. It catalyses the reaction L-threonylcarbamoyladenylate + adenosine(37) in tRNA = N(6)-L-threonylcarbamoyladenosine(37) in tRNA + AMP + H(+). Required for the formation of a threonylcarbamoyl group on adenosine at position 37 (t(6)A37) in tRNAs that read codons beginning with adenine. Is involved in the transfer of the threonylcarbamoyl moiety of threonylcarbamoyl-AMP (TC-AMP) to the N6 group of A37, together with TsaE and TsaB. TsaD likely plays a direct catalytic role in this reaction. This is tRNA N6-adenosine threonylcarbamoyltransferase from Orientia tsutsugamushi (strain Ikeda) (Rickettsia tsutsugamushi).